A 931-amino-acid polypeptide reads, in one-letter code: Probable zinc protease PqqL (931 aa).

Zn(2+) is bound at residue His-80. Catalysis depends on Glu-83, which acts as the Proton acceptor. His-84 and Glu-160 together coordinate Zn(2+).

Belongs to the peptidase M16 family. The cofactor is Zn(2+).

This chain is Probable zinc protease PqqL (pqqL), found in Escherichia coli (strain K12).